Consider the following 212-residue polypeptide: Pyridoxine/pyridoxamine 5'-phosphate oxidase (212 aa).

Residues 8-11 and lysine 66 each bind substrate; that span reads RRNY. Residues 61-66, 76-77, arginine 82, lysine 83, and glutamine 105 each bind FMN; these read RIVLLK and FT. Residues tyrosine 123, arginine 127, and serine 131 each coordinate substrate. FMN-binding positions include 140–141 and tryptophan 184; that span reads QS. 190-192 provides a ligand contact to substrate; sequence RLH. Arginine 194 lines the FMN pocket.

It belongs to the pyridoxamine 5'-phosphate oxidase family. In terms of assembly, homodimer. FMN serves as cofactor.

The enzyme catalyses pyridoxamine 5'-phosphate + O2 + H2O = pyridoxal 5'-phosphate + H2O2 + NH4(+). The catalysed reaction is pyridoxine 5'-phosphate + O2 = pyridoxal 5'-phosphate + H2O2. It participates in cofactor metabolism; pyridoxal 5'-phosphate salvage; pyridoxal 5'-phosphate from pyridoxamine 5'-phosphate: step 1/1. It functions in the pathway cofactor metabolism; pyridoxal 5'-phosphate salvage; pyridoxal 5'-phosphate from pyridoxine 5'-phosphate: step 1/1. Catalyzes the oxidation of either pyridoxine 5'-phosphate (PNP) or pyridoxamine 5'-phosphate (PMP) into pyridoxal 5'-phosphate (PLP). The sequence is that of Pyridoxine/pyridoxamine 5'-phosphate oxidase from Cupriavidus metallidurans (strain ATCC 43123 / DSM 2839 / NBRC 102507 / CH34) (Ralstonia metallidurans).